The sequence spans 287 residues: MDFVLNTIQWLREVPRNFKGEVATVVFDDSADILVYCCVLYILLVFMVPEHIMKNREPFNLRLPFVVWNIGLCLFSICGAYSCVKNMTALYWERGFYRTTCFFDSSVAYDGEFAFWVFYFILSKIPEMIDTVFLVFQKKPVIFLHWYHHLTVAIFCWHAGHALIPSGLWFATMNYCVHSIMYFYYFMCACGMRKVIRPIAPFITMMQLLQMVAGTLIVLYTAYHSYLSESGCEVDRTSIRLGLVMYGSYFFLFAVLFGKLYLKKQVKPSGTASAYAMSKKRNGEKMA.

A run of 3 helical transmembrane segments spans residues 33–53, 64–84, and 115–135; these read ILVY…EHIM, PFVV…YSCV, and FWVF…VFLV. Residues 145-149 carry the HxxHH motif motif; it reads HWYHH. His-148 serves as the catalytic Nucleophile. The next 4 membrane-spanning stretches (helical) occupy residues 150-170, 172-192, 199-219, and 241-261; these read LTVA…GLWF, TMNY…ACGM, IAPF…LIVL, and LGLV…GKLY.

It belongs to the ELO family.

The protein resides in the membrane. It catalyses the reaction a very-long-chain acyl-CoA + malonyl-CoA + H(+) = a very-long-chain 3-oxoacyl-CoA + CO2 + CoA. Functionally, involved in the synthesis of fatty acids. Elongates C16:0 and C18:0 fatty acids to C26:0, with C24:0 being the main product. In Trypanosoma cruzi (strain CL Brener), this protein is Very long chain fatty acid elongase 4.